Here is a 459-residue protein sequence, read N- to C-terminus: Hypotaurine/taurine--pyruvate aminotransferase (459 aa).

K287 is modified (N6-(pyridoxal phosphate)lysine).

It belongs to the class-III pyridoxal-phosphate-dependent aminotransferase family. Requires pyridoxal 5'-phosphate as cofactor.

It carries out the reaction hypotaurine + pyruvate = 2-sulfinoacetaldehyde + L-alanine. The catalysed reaction is taurine + pyruvate = sulfoacetaldehyde + L-alanine. It functions in the pathway organosulfur degradation. Its function is as follows. Converts hypotaurine to alanine and sulfinoacetaldehyde, which desulfinates spontaneously to acetaldehyde and sulfite. Can also catalyze the degradation of taurine into alanine and sulfoacetaldehyde, which is stable. Has 2-fold higher aminotransferase activity with hypotaurine as the substrate. The polypeptide is Hypotaurine/taurine--pyruvate aminotransferase (Paracoccus denitrificans (strain Pd 1222)).